Here is a 481-residue protein sequence, read N- to C-terminus: Beta-amyrin 28-monooxygenase (481 aa).

The chain crosses the membrane as a helical span at residues 4-24; it reads FYVPLLSLFVLFVSLSFYFLF. Cys-428 contributes to the heme binding site.

Belongs to the cytochrome P450 family. Heme is required as a cofactor.

The protein localises to the membrane. It catalyses the reaction beta-amyrin + 3 reduced [NADPH--hemoprotein reductase] + 3 O2 = oleanolate + 3 oxidized [NADPH--hemoprotein reductase] + 4 H2O + 4 H(+). Its function is as follows. Catalyzes the oxidation of the methyl group to a carboxyl group at the C-28 position of beta-amyrin to form oleanolate. The chain is Beta-amyrin 28-monooxygenase from Kalopanax septemlobus (Castor aralia).